We begin with the raw amino-acid sequence, 261 residues long: Maspardin (261 aa).

Residues 87–159 (FCDGFRKLLD…NSFWLMPAFM (73 aa)) enclose the AB hydrolase-1 domain. Serine 257 bears the Phosphoserine mark.

This sequence belongs to the AB hydrolase superfamily. In terms of assembly, interacts with CD4. Interacts with ALDH16A1.

Its subcellular location is the cytoplasm. Functionally, may play a role as a negative regulatory factor in CD4-dependent T-cell activation. The chain is Maspardin (Spg21) from Rattus norvegicus (Rat).